We begin with the raw amino-acid sequence, 189 residues long: Threonylcarbamoyl-AMP synthase (189 aa).

The region spanning 6 to 189 (SPAFESVLTA…ALTGELYRQG (184 aa)) is the YrdC-like domain.

The protein belongs to the SUA5 family. TsaC subfamily.

Its subcellular location is the cytoplasm. The enzyme catalyses L-threonine + hydrogencarbonate + ATP = L-threonylcarbamoyladenylate + diphosphate + H2O. Required for the formation of a threonylcarbamoyl group on adenosine at position 37 (t(6)A37) in tRNAs that read codons beginning with adenine. Catalyzes the conversion of L-threonine, HCO(3)(-)/CO(2) and ATP to give threonylcarbamoyl-AMP (TC-AMP) as the acyladenylate intermediate, with the release of diphosphate. The sequence is that of Threonylcarbamoyl-AMP synthase from Photorhabdus laumondii subsp. laumondii (strain DSM 15139 / CIP 105565 / TT01) (Photorhabdus luminescens subsp. laumondii).